Here is an 83-residue protein sequence, read N- to C-terminus: Mu-theraphotoxin-Hhn2m (83 aa).

An N-terminal signal peptide occupies residues 1 to 21 (MKASMFLALAGLVLLFVVGYA). Residues 22–48 (SESEEKEFPIELLSKIFAVDVFKGEER) constitute a propeptide that is removed on maturation. Intrachain disulfides connect Cys50–Cys65, Cys57–Cys70, and Cys64–Cys77. Leu81 bears the Leucine amide mark.

Belongs to the neurotoxin 10 (Hwtx-1) family. 15 (Hntx-3) subfamily. As to quaternary structure, monomer. Expressed by the venom gland.

The protein localises to the secreted. Lethal neurotoxin. Selectively blocks tetrodotoxin-sensitive voltage-gated sodium channels (Nav). Does not affect tetrodotoxin-resistant voltage-gated sodium channels or calcium channels. The polypeptide is Mu-theraphotoxin-Hhn2m (Cyriopagopus hainanus (Chinese bird spider)).